The primary structure comprises 203 residues: 2-hydroxychromene-2-carboxylate isomerase (203 aa).

The active-site Nucleophile is Ser-11. Ser-11 contributes to the glutathione binding site. Residues Lys-43, 53 to 54 (NR), and Tyr-84 each bind substrate. Glutathione contacts are provided by residues Val-168 and 179–182 (WGND).

Belongs to the GST superfamily. NadH family. Glutathione serves as cofactor.

It carries out the reaction 2-hydroxychromene-2-carboxylate = (3E)-4-(2-hydroxyphenyl)-2-oxobut-3-enoate. The protein operates within aromatic compound metabolism; naphthalene degradation. Involved in the naphthalene catabolic pathway. Catalyzes the reversible glutathione-dependent isomerization of 2-hydroxychromene-2-carboxylate (HCCA) to trans-O-hydroxybenzylidenepyruvate (THBPA). In Pseudomonas putida (Arthrobacter siderocapsulatus), this protein is 2-hydroxychromene-2-carboxylate isomerase (nahD).